The following is a 368-amino-acid chain: Probable multidrug ABC transporter permease YbhR (368 aa).

Residues 1–24 (MFHRLWTLIRKELQSLLREPQTRA) lie on the Cytoplasmic side of the membrane. A helical membrane pass occupies residues 25–45 (ILILPVLIQVILFPFAATLEV). Residues 46-173 (TNATIAIYDE…WYNPNLDYKW (128 aa)) lie on the Periplasmic side of the membrane. Residues 129–366 (AQIAANYLQQ…SAAYAMFRRK (238 aa)) enclose the ABC transmembrane type-2 domain. The chain crosses the membrane as a helical span at residues 174–194 (FVVPSLIAMITTIGVMIVTSL). Topologically, residues 195–222 (SVAREREQGTLDQLLVSPLTTWQIFIGK) are cytoplasmic. Residues 223 to 243 (AVPALIVATFQATIVLAIGIW) form a helical membrane-spanning segment. The Periplasmic portion of the chain corresponds to 244 to 253 (AYQIPFAGSL). A helical membrane pass occupies residues 254-274 (ALFYFTMVIYGLSLVGFGLLI). At 275-284 (SSLCSTQQQA) the chain is on the cytoplasmic side. The chain crosses the membrane as a helical span at residues 285–305 (FIGVFVFMMPAILLSGYVSPV). Topologically, residues 306-339 (ENMPVWLQNLTWINPIRHFTDITKQIYLKDASLD) are periplasmic. A helical transmembrane segment spans residues 340 to 360 (IVWNSLWPLLVITATTGSAAY). At 361 to 368 (AMFRRKVM) the chain is on the cytoplasmic side.

It belongs to the ABC-2 integral membrane protein family. As to quaternary structure, the complex is probably composed of two ATP-binding proteins (YbhF) and two transmembrane proteins (YbhR and YbhS).

It is found in the cell inner membrane. Functionally, part of the ABC transporter complex YbhFSR that could be involved in efflux of cefoperazone. Probably involved in the translocation of the substrate across the membrane. The protein is Probable multidrug ABC transporter permease YbhR (ybhR) of Escherichia coli O157:H7.